The sequence spans 261 residues: MSPGRSVSGGRRAFHVKRSAREAFRRQLDAWGVKASREQLSLLEEYALLLAGYRRANVIGTREPETVLLEHVLDSASCLLFEPLRAAGRVADVGSGGGLPGIPLKILLPEARVVLIESTGKKADFLRYAIESLGLSGVDVVNARVEAVAREAAHRSRYDAALARAVAALPVLAEYCVPLLRVGGHAVAMKGGMPEHELRLGEGAAAVLGARLSGVLEVPRLPEVGEEKRRRLVILEKRRETPGRYPRKAGVPAKRPLRGGG.

Residues Gly94, Leu99, 117 to 119, 145 to 146, and Arg164 each bind S-adenosyl-L-methionine; these read EST and VE.

The protein belongs to the methyltransferase superfamily. RNA methyltransferase RsmG family.

It localises to the cytoplasm. Its function is as follows. Specifically methylates the N7 position of a guanine in 16S rRNA. This is Ribosomal RNA small subunit methyltransferase G from Rubrobacter xylanophilus (strain DSM 9941 / JCM 11954 / NBRC 16129 / PRD-1).